Consider the following 994-residue polypeptide: Myosin IA heavy chain (994 aa).

The region spanning 12 to 720 is the Myosin motor domain; it reads VGVEDLIMLT…PLFLLEDKRN (709 aa). 105 to 112 serves as a coordination point for ATP; it reads GESGAGKT. Residues 574 to 654 are actin-binding; sequence TFIPTDKKRP…RAGYCYRQTF (81 aa). IQ domains follow at residues 723 to 744 and 745 to 774; these read LNDL…KWYL and RTLA…QSIS. Residues 782 to 970 enclose the TH1 domain; the sequence is RNRQSIKLSK…ANSPSFTAKA (189 aa).

This sequence belongs to the TRAFAC class myosin-kinesin ATPase superfamily. Myosin family. In terms of assembly, myosin I heavy chain is single-headed. Dimer of a heavy and a light chain. Inability to self-assemble into filaments.

In terms of biological role, actin-based motor protein, possibly involved in a wide range of motile processes, such as cell movement across a surface, and extension and retraction of pseudopodia or lamellipodia. This Dictyostelium discoideum (Social amoeba) protein is Myosin IA heavy chain (myoA).